A 173-amino-acid chain; its full sequence is Crossover junction endodeoxyribonuclease RuvC (173 aa).

Active-site residues include aspartate 8, glutamate 69, and aspartate 141. Positions 8, 69, and 141 each coordinate Mg(2+).

It belongs to the RuvC family. Homodimer which binds Holliday junction (HJ) DNA. The HJ becomes 2-fold symmetrical on binding to RuvC with unstacked arms; it has a different conformation from HJ DNA in complex with RuvA. In the full resolvosome a probable DNA-RuvA(4)-RuvB(12)-RuvC(2) complex forms which resolves the HJ. Mg(2+) is required as a cofactor.

It is found in the cytoplasm. It catalyses the reaction Endonucleolytic cleavage at a junction such as a reciprocal single-stranded crossover between two homologous DNA duplexes (Holliday junction).. In terms of biological role, the RuvA-RuvB-RuvC complex processes Holliday junction (HJ) DNA during genetic recombination and DNA repair. Endonuclease that resolves HJ intermediates. Cleaves cruciform DNA by making single-stranded nicks across the HJ at symmetrical positions within the homologous arms, yielding a 5'-phosphate and a 3'-hydroxyl group; requires a central core of homology in the junction. The consensus cleavage sequence is 5'-(A/T)TT(C/G)-3'. Cleavage occurs on the 3'-side of the TT dinucleotide at the point of strand exchange. HJ branch migration catalyzed by RuvA-RuvB allows RuvC to scan DNA until it finds its consensus sequence, where it cleaves and resolves the cruciform DNA. The polypeptide is Crossover junction endodeoxyribonuclease RuvC (Stenotrophomonas maltophilia (strain K279a)).